A 284-amino-acid chain; its full sequence is MTSLKKIYSGKVRDLYEIDDQRMLMIATDRLSAFDVILDDPIPAKGQILTAISNFWFDKLKDVVPNHLTGDQPEDVVAAADLPQVEGRAVVAKRLKAVPIEAVVRGYLAGSGWKEYRQSGSVCGIALPAGLKEADKLPEPIFTPSTKAAVGDHDENISFAQCEAIVGAELAAKVRDTAILLYQTAAEYAATRGIIICDTKFEFGLDENGTLTLMDEALTPDSSRFWPADSYQPGSNPPSFDKQFVRDWLEASGWNKQAPAPAVPLDVREKTAAKYREALEKLAG.

The protein belongs to the SAICAR synthetase family.

The enzyme catalyses 5-amino-1-(5-phospho-D-ribosyl)imidazole-4-carboxylate + L-aspartate + ATP = (2S)-2-[5-amino-1-(5-phospho-beta-D-ribosyl)imidazole-4-carboxamido]succinate + ADP + phosphate + 2 H(+). It functions in the pathway purine metabolism; IMP biosynthesis via de novo pathway; 5-amino-1-(5-phospho-D-ribosyl)imidazole-4-carboxamide from 5-amino-1-(5-phospho-D-ribosyl)imidazole-4-carboxylate: step 1/2. In Chromobacterium violaceum (strain ATCC 12472 / DSM 30191 / JCM 1249 / CCUG 213 / NBRC 12614 / NCIMB 9131 / NCTC 9757 / MK), this protein is Phosphoribosylaminoimidazole-succinocarboxamide synthase.